A 448-amino-acid chain; its full sequence is Signal recognition particle 54 kDa protein (448 aa).

Residues 107 to 114 (GIQGSGKT), 189 to 193 (DSAGR), and 247 to 250 (TKLD) each bind GTP.

Belongs to the GTP-binding SRP family. SRP54 subfamily. As to quaternary structure, part of the signal recognition particle protein translocation system, which is composed of SRP and FtsY. Archaeal SRP consists of a 7S RNA molecule of 300 nucleotides and two protein subunits: SRP54 and SRP19.

It is found in the cytoplasm. The catalysed reaction is GTP + H2O = GDP + phosphate + H(+). Its function is as follows. Involved in targeting and insertion of nascent membrane proteins into the cytoplasmic membrane. Binds to the hydrophobic signal sequence of the ribosome-nascent chain (RNC) as it emerges from the ribosomes. The SRP-RNC complex is then targeted to the cytoplasmic membrane where it interacts with the SRP receptor FtsY. The protein is Signal recognition particle 54 kDa protein of Thermococcus kodakarensis (strain ATCC BAA-918 / JCM 12380 / KOD1) (Pyrococcus kodakaraensis (strain KOD1)).